The primary structure comprises 115 residues: UPF0102 protein SYO3AOP1_0546 (115 aa).

It belongs to the UPF0102 family.

This is UPF0102 protein SYO3AOP1_0546 from Sulfurihydrogenibium sp. (strain YO3AOP1).